The primary structure comprises 560 residues: Hemocyanin, units G and H (560 aa).

A disulfide bridge connects residues cysteine 1 and cysteine 11. Residues 1–184 (CPTPDAPQYA…AKGLVSQHIE (184 aa)) are unit G. Positions 12 to 14 (CLH) form a cross-link, 2'-(S-cysteinyl)-histidine (Cys-His). Cysteines 93 and 98 form a disulfide. An N-linked (GlcNAc...) asparagine glycan is attached at asparagine 142. Residues 185-560 (DHDTETLIRK…KPGTGTQLTR (376 aa)) form a unit H region. Residue histidine 230 coordinates Cu cation. A disulfide bridge connects residues cysteine 236 and cysteine 246. Asparagine 240 carries N-linked (GlcNAc...) asparagine glycosylation. The 2'-(S-cysteinyl)-histidine (Cys-His) cross-link spans 247-249 (CQH). Histidine 249, histidine 258, histidine 358, histidine 362, and histidine 389 together coordinate Cu cation. Disulfide bonds link cysteine 348/cysteine 415 and cysteine 476/cysteine 482.

This sequence belongs to the tyrosinase family. Hemocyanin subfamily. As to quaternary structure, decamers of large identical subunits (390 kDa), each containing 8 globular oxygen-binding functional units. Cu(2+) serves as cofactor.

Its function is as follows. Hemocyanins are copper-containing oxygen carriers occurring freely dissolved in the hemolymph of many mollusks and arthropods. The polypeptide is Hemocyanin, units G and H (Sepia officinalis (Common cuttlefish)).